Reading from the N-terminus, the 1189-residue chain is Magnesium-chelatase subunit H (1189 aa).

Belongs to the Mg-chelatase subunit H family.

It catalyses the reaction protoporphyrin IX + Mg(2+) + ATP + H2O = Mg-protoporphyrin IX + ADP + phosphate + 3 H(+). The protein operates within porphyrin-containing compound metabolism; bacteriochlorophyll biosynthesis (light-independent). In terms of biological role, involved in bacteriochlorophyll pigment biosynthesis; introduces a magnesium ion into protoporphyrin IX to yield Mg-protoroporphyrin IX. In Rhodobacter capsulatus (strain ATCC BAA-309 / NBRC 16581 / SB1003), this protein is Magnesium-chelatase subunit H (bchH).